The sequence spans 910 residues: Anoctamin-6 (910 aa).

Over 1–300 the chain is Cytoplasmic; sequence MKKMSRNVLL…YGEKIGIYFA (300 aa). A helical membrane pass occupies residues 301–321; the sequence is WLGYYTQMLLLAAVVGVACFL. The Extracellular segment spans residues 322 to 375; sequence YGYLNQDNCTWSKEVCHPDIGGKIIMCPQCDRLCPFWKLNITCESSKKLCIFDS. A glycan (N-linked (GlcNAc...) asparagine) is linked at Asn-329. 5 disulfides stabilise this stretch: Cys-330-Cys-371, Cys-337-Cys-364, Cys-348-Cys-806, Cys-351-Cys-355, and Cys-595-Cys-600. Residue Asn-361 is glycosylated (N-linked (GlcNAc...) asparagine). A helical membrane pass occupies residues 376–396; it reads FGTLVFAVFMGVWVTLFLEFW. Over 397–455 the chain is Cytoplasmic; the sequence is KRRQAELEYEWDTVELQQEEQARPEYEARCTHVVINEITQEEERIPFTAWGKCIRITLC. The chain crosses the membrane as a helical span at residues 456–476; sequence ASAVFFWILLIIASVIGIIVY. The Extracellular segment spans residues 477–509; the sequence is RLSVFIVFSAKLPKNINGTDPIQKYLTPQTATS. N-linked (GlcNAc...) asparagine glycosylation occurs at Asn-493. Residues 510–530 traverse the membrane as a helical segment; the sequence is ITASIISFIIIMILNTIYEKV. Residues 531–551 are Cytoplasmic-facing; it reads AIMITNFELPRTQTDYENSLT. A helical membrane pass occupies residues 552-572; that stretch reads MKMFLFQFVNYYSSCFYIAFF. Over 573–601 the chain is Extracellular; that stretch reads KGKFVGYPGDPVYWLGKYRNEECDPGGCL. Residues 602 to 621 form a helical membrane-spanning segment; the sequence is LELTTQLTIIMGGKAIWNNI. The Cytoplasmic portion of the chain corresponds to 622-663; it reads QEVLLPWIMNLIGRFHRVSGSEKITPRWEQDYHLQPMGKLGL. Ca(2+) is bound by residues Glu-623, Glu-666, and Glu-669. The next 2 helical transmembrane spans lie at 664-684 and 685-705; these read FYEY…VASF and PLAP…DAWK. Topologically, residues 706–722 are cytoplasmic; sequence LTTQFRRLVPEKAQDIG. Residues 723–743 traverse the membrane as a helical segment; that stretch reads AWQPIMQGIAILAVVTNAMII. Topologically, residues 744 to 836 are extracellular; sequence AFTSDMIPRL…YWHVIAAKLA (93 aa). 3 N-linked (GlcNAc...) asparagine glycosylation sites follow: Asn-777, Asn-790, and Asn-802. The helical transmembrane segment at 837–857 threads the bilayer; that stretch reads FIIVMEHVIYSVKFFISYAIP. Topologically, residues 858 to 910 are cytoplasmic; that stretch reads DVSKRTKSKIQREKYLTQKLLHENHLKDMTKNMGVIAERMIEAVDNNLRPKSE.

This sequence belongs to the anoctamin family. In terms of assembly, homodimer. In terms of tissue distribution, expressed in embryonic stem cell, fetal liver, retina, chronic myologenous leukemia and intestinal cancer.

The protein localises to the cell membrane. It carries out the reaction a 1,2-diacyl-sn-glycero-3-phospho-L-serine(in) = a 1,2-diacyl-sn-glycero-3-phospho-L-serine(out). The catalysed reaction is a beta-D-galactosyl-(1&lt;-&gt;1')-N-acylsphing-4-enine(out) = a beta-D-galactosyl-(1&lt;-&gt;1')-N-acylsphing-4-enine(in). It catalyses the reaction a 1,2-diacyl-sn-glycero-3-phosphocholine(in) = a 1,2-diacyl-sn-glycero-3-phosphocholine(out). With respect to regulation, exhibits synergistic gating by Ca(2+) and voltage. Inhibited by some non-specific cation channel blockers such as: ruthenium red, 2-aminoethyl diphenylborinate (2APB), gadolinium and cadmium ions. Its activity is regulated as follows. (Microbial infection) Activated by SARS coronavirus-2/SARS-CoV-2 spike protein. Functionally, small-conductance calcium-activated nonselective cation (SCAN) channel which acts as a regulator of phospholipid scrambling in platelets and osteoblasts. Phospholipid scrambling results in surface exposure of phosphatidylserine which in platelets is essential to trigger the clotting system whereas in osteoblasts is essential for the deposition of hydroxyapatite during bone mineralization. Has calcium-dependent phospholipid scramblase activity; scrambles phosphatidylserine, phosphatidylcholine and galactosylceramide. Can generate outwardly rectifying chloride channel currents in airway epithelial cells and Jurkat T lymphocytes. In terms of biological role, (Microbial infection) Upon SARS coronavirus-2/SARS-CoV-2 infection, is activated by spike protein which increases the amplitude of spontaneous Ca(2+) signals and is required for spike-mediated syncytia. This is Anoctamin-6 from Homo sapiens (Human).